The following is a 388-amino-acid chain: GTPase Obg (388 aa).

The Obg domain occupies 1–159 (MKFIDEASIR…RSLRLELLLL (159 aa)). Residues 160 to 333 (ADVGLLGMPN…LSLKLLDYIA (174 aa)) form the OBG-type G domain. GTP contacts are provided by residues 166 to 173 (GMPNAGKS), 191 to 195 (FTTLV), 213 to 216 (DIPG), 283 to 286 (NKTD), and 314 to 316 (SAF). The Mg(2+) site is built by serine 173 and threonine 193.

This sequence belongs to the TRAFAC class OBG-HflX-like GTPase superfamily. OBG GTPase family. As to quaternary structure, monomer. The cofactor is Mg(2+).

It localises to the cytoplasm. Its function is as follows. An essential GTPase which binds GTP, GDP and possibly (p)ppGpp with moderate affinity, with high nucleotide exchange rates and a fairly low GTP hydrolysis rate. Plays a role in control of the cell cycle, stress response, ribosome biogenesis and in those bacteria that undergo differentiation, in morphogenesis control. The sequence is that of GTPase Obg from Shewanella denitrificans (strain OS217 / ATCC BAA-1090 / DSM 15013).